Reading from the N-terminus, the 358-residue chain is Peptide chain release factor 1 (358 aa).

Gln-233 bears the N5-methylglutamine mark.

The protein belongs to the prokaryotic/mitochondrial release factor family. Methylated by PrmC. Methylation increases the termination efficiency of RF1.

The protein resides in the cytoplasm. Functionally, peptide chain release factor 1 directs the termination of translation in response to the peptide chain termination codons UAG and UAA. This Listeria innocua serovar 6a (strain ATCC BAA-680 / CLIP 11262) protein is Peptide chain release factor 1.